A 644-amino-acid chain; its full sequence is Exoribonuclease 2 (644 aa).

The region spanning 189–516 (RRDLTALNFV…NHRLLKAIVK (328 aa)) is the RNB domain. An S1 motif domain is found at 561-643 (DTRFAAEIID…ETRSIIARPV (83 aa)).

It belongs to the RNR ribonuclease family. RNase II subfamily.

Its subcellular location is the cytoplasm. The catalysed reaction is Exonucleolytic cleavage in the 3'- to 5'-direction to yield nucleoside 5'-phosphates.. Functionally, involved in mRNA degradation. Hydrolyzes single-stranded polyribonucleotides processively in the 3' to 5' direction. The sequence is that of Exoribonuclease 2 from Enterobacter sp. (strain 638).